Here is a 201-residue protein sequence, read N- to C-terminus: MAKEFKQHTGLAVPLDASHVDTDAIIPKQFLQKVTRVGFGAHLFHEWRFLDDEGKQPNPDFVLNFPRYQGASILLARENFGCGSSREHAPWALDDYGIRAIIAPSFADIFYGNSLNNQMLPVRLSEEEVDELFKYVEANEGATITVDLEAQTVSANGKTYHFEIDSFRRHCLLNGLDNIGLTLQHEEKIADYESKIPAFLR.

Belongs to the LeuD family. LeuD type 1 subfamily. Heterodimer of LeuC and LeuD.

The enzyme catalyses (2R,3S)-3-isopropylmalate = (2S)-2-isopropylmalate. It functions in the pathway amino-acid biosynthesis; L-leucine biosynthesis; L-leucine from 3-methyl-2-oxobutanoate: step 2/4. Catalyzes the isomerization between 2-isopropylmalate and 3-isopropylmalate, via the formation of 2-isopropylmaleate. The protein is 3-isopropylmalate dehydratase small subunit of Glaesserella parasuis serovar 5 (strain SH0165) (Haemophilus parasuis).